Consider the following 331-residue polypeptide: Pantothenate kinase (331 aa).

109–116 (GSVAVGKS) provides a ligand contact to ATP.

This sequence belongs to the prokaryotic pantothenate kinase family.

It is found in the cytoplasm. It carries out the reaction (R)-pantothenate + ATP = (R)-4'-phosphopantothenate + ADP + H(+). Its pathway is cofactor biosynthesis; coenzyme A biosynthesis; CoA from (R)-pantothenate: step 1/5. This Rhizobium johnstonii (strain DSM 114642 / LMG 32736 / 3841) (Rhizobium leguminosarum bv. viciae) protein is Pantothenate kinase.